Here is a 398-residue protein sequence, read N- to C-terminus: Small ribosomal subunit protein mS29 (398 aa).

The transit peptide at 1–21 directs the protein to the mitochondrion; that stretch reads MMLKGITRLISRIHKLDPGRF. A disordered region spans residues 39 to 67; sequence QVPVESPRAISRTNENDPAKHGDQHEGQH. The segment covering 52 to 66 has biased composition (basic and acidic residues); the sequence is NENDPAKHGDQHEGQ. Residues Met-100 and 128–135 contribute to the GTP site; that span reads GEKGTGKT. 2 positions are modified to N6-acetyllysine: Lys-175 and Lys-207.

Belongs to the mitochondrion-specific ribosomal protein mS29 family. Component of the mitochondrial small ribosomal subunit (mt-SSU). Mature mammalian 55S mitochondrial ribosomes consist of a small (28S) and a large (39S) subunit. The 28S small subunit contains a 12S ribosomal RNA (12S mt-rRNA) and 30 different proteins. The 39S large subunit contains a 16S rRNA (16S mt-rRNA), a copy of mitochondrial valine transfer RNA (mt-tRNA(Val)), which plays an integral structural role, and 52 different proteins. Interacts with DELE1. Interacts with NOA1. In terms of tissue distribution, ubiquitous.

The protein localises to the mitochondrion. The catalysed reaction is GTP + H2O = GDP + phosphate + H(+). As a component of the mitochondrial small ribosomal subunit, it plays a role in the translation of mitochondrial mRNAs. Involved in mediating interferon-gamma-induced cell death. Displays GTPase activity in vitro. The protein is Small ribosomal subunit protein mS29 of Homo sapiens (Human).